We begin with the raw amino-acid sequence, 208 residues long: Interleukin-6 (208 aa).

A signal peptide spans 1 to 27 (MTFLSTSAFSPLAFSLGLLLVVATAFP). Cysteines 68 and 74 form a disulfide. Serine 77 is subject to Phosphoserine. A disulfide bridge connects residues cysteine 97 and cysteine 107.

The protein belongs to the IL-6 superfamily. In terms of assembly, component of a hexamer of two molecules each of IL6, IL6R and IL6ST; first binds to IL6R to associate with the signaling subunit IL6ST. Interacts with IL6R (via the N-terminal ectodomain); this interaction may be affected by IL6R-binding with SORL1, hence decreasing IL6 cis signaling. Interacts with SORL1 (via the N-terminal ectodomain); this interaction leads to IL6 internalization and lysosomal degradation. May form a trimeric complex with the soluble SORL1 ectodomain and soluble IL6R receptor; this interaction might stabilize circulating IL6, hence promoting IL6 trans signaling.

Its subcellular location is the secreted. Its function is as follows. Cytokine with a wide variety of biological functions in immunity, tissue regeneration, and metabolism. Binds to IL6R, then the complex associates to the signaling subunit IL6ST/gp130 to trigger the intracellular IL6-signaling pathway. The interaction with the membrane-bound IL6R and IL6ST stimulates 'classic signaling', whereas the binding of IL6 and soluble IL6R to IL6ST stimulates 'trans-signaling'. Alternatively, 'cluster signaling' occurs when membrane-bound IL6:IL6R complexes on transmitter cells activate IL6ST receptors on neighboring receiver cells. In terms of biological role, IL6 is a potent inducer of the acute phase response. Rapid production of IL6 contributes to host defense during infection and tissue injury, but excessive IL6 synthesis is involved in disease pathology. In the innate immune response, is synthesized by myeloid cells, such as macrophages and dendritic cells, upon recognition of pathogens through toll-like receptors (TLRs) at the site of infection or tissue injury. In the adaptive immune response, is required for the differentiation of B cells into immunoglobulin-secreting cells. Plays a major role in the differentiation of CD4(+) T cell subsets. Essential factor for the development of T follicular helper (Tfh) cells that are required for the induction of germinal-center formation. Required to drive naive CD4(+) T cells to the Th17 lineage. Also required for proliferation of myeloma cells and the survival of plasmablast cells. Acts as an essential factor in bone homeostasis and on vessels directly or indirectly by induction of VEGF, resulting in increased angiogenesis activity and vascular permeability. Induces, through 'trans-signaling' and synergistically with IL1B and TNF, the production of VEGF. Involved in metabolic controls, is discharged into the bloodstream after muscle contraction increasing lipolysis and improving insulin resistance. 'Trans-signaling' in central nervous system also regulates energy and glucose homeostasis. Mediates, through GLP-1, crosstalk between insulin-sensitive tissues, intestinal L cells and pancreatic islets to adapt to changes in insulin demand. Also acts as a myokine. Plays a protective role during liver injury, being required for maintenance of tissue regeneration. Also has a pivotal role in iron metabolism by regulating HAMP/hepcidin expression upon inflammation or bacterial infection. Through activation of IL6ST-YAP-NOTCH pathway, induces inflammation-induced epithelial regeneration. This is Interleukin-6 (IL6) from Felis catus (Cat).